A 333-amino-acid polypeptide reads, in one-letter code: Anthranilate phosphoribosyltransferase (333 aa).

Residues Gly-81, 84-85, Thr-89, 91-94, 109-117, and Ala-121 contribute to the 5-phospho-alpha-D-ribose 1-diphosphate site; these read GD, NIST, and KHGNRSVSS. Gly-81 lines the anthranilate pocket. Ser-93 provides a ligand contact to Mg(2+). Asn-112 contributes to the anthranilate binding site. Arg-167 provides a ligand contact to anthranilate. Mg(2+)-binding residues include Asp-225 and Glu-226.

This sequence belongs to the anthranilate phosphoribosyltransferase family. In terms of assembly, homodimer. It depends on Mg(2+) as a cofactor.

The catalysed reaction is N-(5-phospho-beta-D-ribosyl)anthranilate + diphosphate = 5-phospho-alpha-D-ribose 1-diphosphate + anthranilate. Its pathway is amino-acid biosynthesis; L-tryptophan biosynthesis; L-tryptophan from chorismate: step 2/5. In terms of biological role, catalyzes the transfer of the phosphoribosyl group of 5-phosphorylribose-1-pyrophosphate (PRPP) to anthranilate to yield N-(5'-phosphoribosyl)-anthranilate (PRA). The sequence is that of Anthranilate phosphoribosyltransferase from Pasteurella multocida (strain Pm70).